The following is a 588-amino-acid chain: Adenine deaminase (588 aa).

It belongs to the metallo-dependent hydrolases superfamily. Adenine deaminase family. As to quaternary structure, homodimer. The cofactor is Mn(2+).

It catalyses the reaction adenine + H2O + H(+) = hypoxanthine + NH4(+). The sequence is that of Adenine deaminase from Shigella flexneri.